The following is a 97-amino-acid chain: Peptide YY-A (97 aa).

Residues 1-28 form the signal peptide; that stretch reads MAVMLKPWTVVATVLICVLLCLGTFVDA. Y64 bears the Tyrosine amide mark. Residues 68 to 97 constitute a propeptide, C-terminal extension; sequence STSEDVMAELLFGDDTEHKQRSRYDDSFMW.

The protein belongs to the NPY family. In terms of tissue distribution, mainly expressed in brainstem neurons, and in the telencephalon. Also expressed in intestinal endocrine cells.

The protein localises to the secreted. The protein is Peptide YY-A (pyya) of Danio rerio (Zebrafish).